The following is a 371-amino-acid chain: Probable RNA 3'-terminal phosphate cyclase-like protein (371 aa).

This sequence belongs to the RNA 3'-terminal cyclase family. Type 2 subfamily. Part of the small subunit (SSU) processome, composed of more than 70 proteins and the RNA chaperone small nucleolar RNA (snoRNA) U3.

The protein resides in the nucleus. It is found in the nucleolus. In terms of biological role, part of the small subunit (SSU) processome, first precursor of the small eukaryotic ribosomal subunit. During the assembly of the SSU processome in the nucleolus, many ribosome biogenesis factors, an RNA chaperone and ribosomal proteins associate with the nascent pre-rRNA and work in concert to generate RNA folding, modifications, rearrangements and cleavage as well as targeted degradation of pre-ribosomal RNA by the RNA exosome. Does not have cyclase activity. The sequence is that of Probable RNA 3'-terminal phosphate cyclase-like protein (rcl1) from Dictyostelium discoideum (Social amoeba).